A 171-amino-acid chain; its full sequence is uncharacterized protein (171 aa).

2 disordered regions span residues 27–53 and 82–108; these read DCPG…KMVL and GHLE…PSSS. A compositionally biased stretch (polar residues) spans 32 to 50; it reads GNNNREPSISTRGRTSSSK.

This is an uncharacterized protein from Homo sapiens (Human).